A 459-amino-acid chain; its full sequence is MFS-type transporter SLC18B1 (459 aa).

Residue methionine 1 is modified to N-acetylmethionine. Positions 1 to 10 (MDEAGSPAPA) are enriched in low complexity. The segment at 1-27 (MDEAGSPAPAGTGGGDDPGGSTRETSR) is disordered. Topologically, residues 1 to 33 (MDEAGSPAPAGTGGGDDPGGSTRETSRRLSREQ) are cytoplasmic. At serine 21 the chain carries Phosphoserine. A helical transmembrane segment spans residues 34 to 54 (IFVLVSAASMNLGCMMTYSIL). Residues 55–70 (GPFFPKEAEKKGASNT) are Extracellular-facing. The chain crosses the membrane as a helical span at residues 71-91 (MIGMIFGCYALFELLASLVFG). Residues 92–100 (KYLVHIGAK) are Cytoplasmic-facing. The helical transmembrane segment at 101–121 (FMFIAGMFVSGGVTILFGVLD) threads the bilayer. At 122–127 (QLPEGP) the chain is on the extracellular side. Residues 128–148 (IFIAMCFLVRIVDAIGFGAAI) traverse the membrane as a helical segment. The Cytoplasmic segment spans residues 149-167 (TASSSILAKAFPNNVATVM). Residues 168–188 (GSLEVFSGLGLVAGPPLGGLL) form a helical membrane-spanning segment. The Extracellular segment spans residues 189 to 195 (YQSFGYE). A helical membrane pass occupies residues 196–216 (VPFIFLGCIVLLMIPLNLYIL). The Cytoplasmic segment spans residues 217-235 (PSYAQESDPGKQSFWKLVT). The helical transmembrane segment at 236–256 (LPKMGLLAFVIISLSSCFGFL) threads the bilayer. Residues 257 to 274 (DPTLSLFVMEKFSLSTGY) lie on the Extracellular side of the membrane. A helical membrane pass occupies residues 275–295 (VGLVFLGLSLSYAISSPLFGL). The Cytoplasmic portion of the chain corresponds to 296–306 (LSDKMPTLRKW). Residues 307–327 (LLVFGNLITAGCYMLLGPVPL) form a helical membrane-spanning segment. The Extracellular segment spans residues 328–333 (LHIKSQ). A helical transmembrane segment spans residues 334–354 (LWLLVLVLVVNGISAGMSIIP). Residues 355-379 (TFPEMLSCAYANGFEDSISTLGLVS) lie on the Cytoplasmic side of the membrane. The chain crosses the membrane as a helical span at residues 380–400 (GLFGAMWSVGAFMGPILGGFL). The Extracellular portion of the chain corresponds to 401 to 409 (CEKIGFEWA). The chain crosses the membrane as a helical span at residues 410-430 (AAMQGLWTLLSGVSMALFYLW). Topologically, residues 431–459 (EDSTARRRSKAQNSLGTEEERAALLPNDT) are cytoplasmic. The interval 440-459 (KAQNSLGTEEERAALLPNDT) is disordered.

Belongs to the major facilitator superfamily. In terms of tissue distribution, widely expressed, with highest expression in the lung, pancreas and kidney. High expression in the CNS, particularly in the hypothalamus, the thalamus and the cerebellum. In the forebrain, abundantly expressed in the telencephalon, especially in the cerebral cortex layers, except layer 1, as well as in the induseum griseum, the piriform area, the taenia tecta, dorsal part and in the entorhinal area, lateral part. Lower levels in the bed anterior olfactory nucleus, posteroventral part and in layer two of the olfactory tubercle. In the amygdala, high levels observed in the intercalated nucleus and the medial nucleus. In the diencephalon, expressed in the nuclei in both the hypothalamus and thalamus. Among the hypothalamic areas, strongest expression in the arcuate nucleus and in the ventromedial nucleus, as well as in the suprachiasmatic nucleus, anterior nucleus, especially in its central part, and in the magnocellular division of the paraventricular nucleus. In the thalamus, highest levels in the medial habenula. Expression also observed in the paraventricular thalamic nucleus, parataenial nucleus, central medial nucleus, intermediodorsal nucleus and lateral dorsal nucleus. In the hindbrain, detected in the cerebellum and in the pons. In the midbrain and the medulla, expression levels were modest. In the midbrain, highest expression in the periaqueductal gray and all subdivisions of the interpeduncular nucleus, except for the caudal part. In the pons, the strongest labeling was seen in the nucleus incertus and in the tegmental nucleus. Expressed in bone marrow-derived mast cells (at protein level).

Its subcellular location is the cytoplasmic vesicle. It localises to the secretory vesicle membrane. It is found in the secretory vesicle. The protein localises to the synaptic vesicle membrane. The enzyme catalyses spermine(in) + n H(+)(out) = spermine(out) + n H(+)(in). The catalysed reaction is spermidine(in) + n H(+)(out) = spermidine(out) + n H(+)(in). It catalyses the reaction serotonin(in) + n H(+)(out) = serotonin(out) + n H(+)(in). Functionally, proton-coupled polyamine antiporter involved in the translocation of polyamines from cytosol into secretory vesicles prior to their release via exocytosis. Uses the electrochemical proton gradient generated by a V-type proton-pumping ATPase to couple the efflux of protons with the uptake of a polyamine molecule. Facilitates vesicular storage of spermine and spermidine in astrocytes with an impact on glutamatergic neuronal transmission and memory formation. Upon antigen stimulation, regulates polyamine accumulation and release in mast cell secretory granules, which in turn potentiates mast cell degranulation and histamine secretion. This is MFS-type transporter SLC18B1 from Mus musculus (Mouse).